We begin with the raw amino-acid sequence, 615 residues long: Chromosomal replication initiator protein DnaA (615 aa).

The tract at residues 1-88 (MSEGQINLAM…RVAVTVDPSA (88 aa)) is domain I, interacts with DnaA modulators. The segment at 85–272 (DPSAVPPSAP…PTSGGPDQLN (188 aa)) is disordered. A domain II region spans residues 88 to 269 (AVPPSAPTEE…STNPTSGGPD (182 aa)). Composition is skewed to low complexity over residues 94–112 (PTEEASSTSSPDSSHPAPD) and 173–190 (PSSADPGSPASPAPVAES). The domain III, AAA+ region stretch occupies residues 270–486 (QLNPKYTFDT…GALIRVTAFA (217 aa)). Residues glycine 314, glycine 316, lysine 317, and threonine 318 each coordinate ATP. Residues 487–615 (SLNRQSVDLH…QQAHHNHHHL (129 aa)) are domain IV, binds dsDNA.

Belongs to the DnaA family. As to quaternary structure, oligomerizes as a right-handed, spiral filament on DNA at oriC.

It localises to the cytoplasm. Its function is as follows. Plays an essential role in the initiation and regulation of chromosomal replication. ATP-DnaA binds to the origin of replication (oriC) to initiate formation of the DNA replication initiation complex once per cell cycle. Binds the DnaA box (a 9 base pair repeat at the origin) and separates the double-stranded (ds)DNA. Forms a right-handed helical filament on oriC DNA; dsDNA binds to the exterior of the filament while single-stranded (ss)DNA is stabiized in the filament's interior. The ATP-DnaA-oriC complex binds and stabilizes one strand of the AT-rich DNA unwinding element (DUE), permitting loading of DNA polymerase. After initiation quickly degrades to an ADP-DnaA complex that is not apt for DNA replication. Binds acidic phospholipids. The protein is Chromosomal replication initiator protein DnaA of Thermobifida fusca (strain YX).